The following is a 430-amino-acid chain: MEIKLKKTNYVSGVIEVPSDKSITHRAVMLSSLAEGNSIVRDYLPSDDCNRTIEAFRQMGVEIKIDNGSLYVKGAGLKLAKPQNGKYNIYAGNSGTTTRLLSGILAGQDFETVITGDDSLSKRPMRRVILPLSQMGANIKSNDGLLPLIIKGRNPLKELNYESDKSTAQVKSAILFAGLFADGATTYKEPVKSRDHSERMLKAFGVNIKVNGNFVTVYPAEKLIAQDITVPGDISSAAFFIAAALIVPDSNLTIRNVGVNPTRDGLIEVLKQMGADITLANMREISQEPVCDIVVKYSKLKAADIDASLVPRMVDEIPVFVLIATQADGITRISGAKELRVKESDRIESVTSQFKKLGAQIESLEDGFIINGNSKFNLAGTIVDSFDDHRIAMTLAIASLIAEGETIIRDSHCVDISFPGFYKVLNNICR.

The 3-phosphoshikimate site is built by K21, S22, and R26. Position 21 (K21) interacts with phosphoenolpyruvate. Residues G95 and R123 each contribute to the phosphoenolpyruvate site. 3-phosphoshikimate is bound by residues T167, Q169, D315, and K342. Position 169 (Q169) interacts with phosphoenolpyruvate. The Proton acceptor role is filled by D315. Residues R346 and R390 each contribute to the phosphoenolpyruvate site.

Belongs to the EPSP synthase family. As to quaternary structure, monomer.

Its subcellular location is the cytoplasm. The enzyme catalyses 3-phosphoshikimate + phosphoenolpyruvate = 5-O-(1-carboxyvinyl)-3-phosphoshikimate + phosphate. It participates in metabolic intermediate biosynthesis; chorismate biosynthesis; chorismate from D-erythrose 4-phosphate and phosphoenolpyruvate: step 6/7. Functionally, catalyzes the transfer of the enolpyruvyl moiety of phosphoenolpyruvate (PEP) to the 5-hydroxyl of shikimate-3-phosphate (S3P) to produce enolpyruvyl shikimate-3-phosphate and inorganic phosphate. This is 3-phosphoshikimate 1-carboxyvinyltransferase from Endomicrobium trichonymphae.